The primary structure comprises 357 residues: Acidic fibroblast growth factor intracellular-binding protein (357 aa).

Residue Thr2 is modified to N-acetylthreonine.

As to quaternary structure, binds to internalized FGF1; this interaction is increased in the presence of CSNKB, suggesting a possible cooperative interaction between CSNKB and FIBP in binding to FGF1.

It is found in the nucleus. The protein resides in the endomembrane system. Functionally, may be involved in mitogenic function of FGF1. May mediate with IER2 FGF-signaling in the establishment of laterality in the embryo. The sequence is that of Acidic fibroblast growth factor intracellular-binding protein (FIBP) from Chlorocebus aethiops (Green monkey).